A 427-amino-acid chain; its full sequence is Methylthioribose kinase 2 (427 aa).

ATP is bound by residues 49–53 (DGNLN), K68, and 122–124 (RYI). N51 contributes to the substrate binding site. Substrate is bound at residue D243. 260–262 (DPE) lines the ATP pocket. Position 370 (R370) interacts with substrate.

This sequence belongs to the methylthioribose kinase family. In terms of assembly, homodimer.

It carries out the reaction 5-(methylsulfanyl)-D-ribose + ATP = 5-(methylsulfanyl)-alpha-D-ribose 1-phosphate + ADP + H(+). It functions in the pathway amino-acid biosynthesis; L-methionine biosynthesis via salvage pathway; S-methyl-5-thio-alpha-D-ribose 1-phosphate from S-methyl-5'-thioadenosine (hydrolase route): step 2/2. In terms of biological role, catalyzes the phosphorylation of methylthioribose into methylthioribose-1-phosphate. The sequence is that of Methylthioribose kinase 2 (MTK2) from Oryza sativa subsp. japonica (Rice).